The sequence spans 891 residues: Alanine--tRNA ligase (891 aa).

Residues H564, H568, C681, and H685 each coordinate Zn(2+).

The protein belongs to the class-II aminoacyl-tRNA synthetase family. The cofactor is Zn(2+).

It localises to the cytoplasm. The enzyme catalyses tRNA(Ala) + L-alanine + ATP = L-alanyl-tRNA(Ala) + AMP + diphosphate. In terms of biological role, catalyzes the attachment of alanine to tRNA(Ala) in a two-step reaction: alanine is first activated by ATP to form Ala-AMP and then transferred to the acceptor end of tRNA(Ala). Also edits incorrectly charged Ser-tRNA(Ala) and Gly-tRNA(Ala) via its editing domain. The chain is Alanine--tRNA ligase from Methylorubrum extorquens (strain PA1) (Methylobacterium extorquens).